The sequence spans 237 residues: MANPFFQFKQFTVWHDKCAMKVGTDGVLLGAWASVQGAHRILDIGTGTGLVALMLAQRSLPDANIVALEIDEAAAGQAKENVARSPWKDRIEVVKQDFLFYQSPDKFDVIVSNPPYFVDSLSCPDQQRSMARHNDSLTYEKLLKGVADLLKKEGTFTIVIPTDVADRVKTAASEYHLYATRQLNVITKPGGTPKRMLITFTFNNEGCIKEELLTEVARHQYSEEYKELTREYYLHLK.

The protein belongs to the methyltransferase superfamily. tRNA (adenine-N(6)-)-methyltransferase family.

Its subcellular location is the cytoplasm. It catalyses the reaction adenosine(37) in tRNA1(Val) + S-adenosyl-L-methionine = N(6)-methyladenosine(37) in tRNA1(Val) + S-adenosyl-L-homocysteine + H(+). Its function is as follows. Specifically methylates the adenine in position 37 of tRNA(1)(Val) (anticodon cmo5UAC). The protein is tRNA1(Val) (adenine(37)-N6)-methyltransferase of Bacteroides thetaiotaomicron (strain ATCC 29148 / DSM 2079 / JCM 5827 / CCUG 10774 / NCTC 10582 / VPI-5482 / E50).